The following is a 437-amino-acid chain: CMP-5'-(3-aminopropyl)phosphonate hydroxylase (437 aa).

It depends on FAD as a cofactor.

It catalyses the reaction CMP-5'-(3-aminopropyl)phosphonate + NADPH + O2 = CMP-5'-(N-hydroxy-3-aminopropyl)phosphonate + NADP(+) + H2O. It functions in the pathway antibiotic biosynthesis. Hydroxylase involved in the biosynthesis of the phosphonate antibiotic FR-900098, a potent antimalarial agent that acts as an inhibitor of 1-deoxy-D-xylulose 5-phosphate reductoisomerase (DXR), the first enzyme in the nonmevalonate pathway for isoprenoid biosynthesis. Catalyzes the N-hydroxylation of CMP-5'-3-aminopropylphosphonate (CMP-5'-3APn) to CMP-5'-(N-hydroxy-3-aminopropyl)phosphonate (CMP-5'-H3APn). Cannot use CMP-5'-N-acetyl-3-aminopropylphosphonate (CMP-5'-Ac3APn) as a substrate. This is CMP-5'-(3-aminopropyl)phosphonate hydroxylase from Streptomyces rubellomurinus (strain ATCC 31215).